We begin with the raw amino-acid sequence, 275 residues long: Tryptase (275 aa).

The first 20 residues, 1–20, serve as a signal peptide directing secretion; the sequence is MLNLLVLALPLLVSLVHTAP. Residues 21–30 constitute a propeptide, activation peptide; that stretch reads APGQALERAG. Positions 31 to 272 constitute a Peptidase S1 domain; sequence IVGGKEAPGH…YLDWIHQCIP (242 aa). A disulfide bond links Cys-59 and Cys-75. Catalysis depends on charge relay system residues His-74 and Asp-121. The N-linked (GlcNAc...) asparagine glycan is linked to Asn-132. Disulfide bonds link Cys-155/Cys-230, Cys-188/Cys-211, and Cys-220/Cys-248. The Charge relay system role is filled by Ser-224. The N-linked (GlcNAc...) asparagine glycan is linked to Asn-233.

The protein belongs to the peptidase S1 family. Tryptase subfamily. In terms of assembly, homotetramer.

Its subcellular location is the secreted. The enzyme catalyses Preferential cleavage: Arg-|-Xaa, Lys-|-Xaa, but with more restricted specificity than trypsin.. In terms of biological role, tryptase is the major neutral protease present in mast cells and is secreted upon the coupled activation-degranulation response of this cell type. The polypeptide is Tryptase (MCT7) (Sus scrofa (Pig)).